Reading from the N-terminus, the 836-residue chain is Taste receptor type 1 member 2 (836 aa).

Positions 1 to 19 (MGPRAKAVCSLFILLQVLA) are cleaved as a signal peptide. Topologically, residues 20–565 (EPAENSDFYL…AFLEWHEPST (546 aa)) are extracellular. 9 N-linked (GlcNAc...) asparagine glycosylation sites follow: N84, N292, N312, N351, N427, N479, N486, N526, and N546. The chain crosses the membrane as a helical span at residues 566–586 (IFVVMLTILGFLSTLAIMVIF). Residues 587–601 (WRHLHTPVVRSAGGP) lie on the Cytoplasmic side of the membrane. The helical transmembrane segment at 602-622 (MCFLMLVPLLLAYAMVPMYIG) threads the bilayer. Residues 623–634 (QPTFFSCLWRQT) lie on the Extracellular side of the membrane. The chain crosses the membrane as a helical span at residues 635–655 (FFTLCFTICISCITVRSFQIV). At 656–680 (CIFKMARRLPRAYGYWVRCHGPYVF) the chain is on the cytoplasmic side. A helical transmembrane segment spans residues 681-701 (VASFMVLKVVIVAGNVLATTA). Residues 702 to 724 (NPTARPDPDDPNIMVLSCNYRRA) lie on the Extracellular side of the membrane. A helical transmembrane segment spans residues 725–745 (LLFNTSLDLLLSVAGFSFAYM). The Cytoplasmic segment spans residues 746-757 (GKELPTNYNEAK). The helical transmembrane segment at 758–778 (FITLCMTFYFTSSVSLCTFMS) threads the bilayer. Residues 779 to 781 (VYD) lie on the Extracellular side of the membrane. A helical transmembrane segment spans residues 782 to 802 (GVLVTILDLLITVLNLLGISF). Over 803–836 (GYFGPKCYMVLFYPERNTQVYFSSMIQGYTMGKD) the chain is Cytoplasmic.

It belongs to the G-protein coupled receptor 3 family. TAS1R subfamily. As to quaternary structure, forms heterodimers with TAS1R3.

Its subcellular location is the cell membrane. In terms of biological role, putative taste receptor. TAS1R2/TAS1R3 recognizes diverse natural and synthetic sweeteners. In Canis lupus familiaris (Dog), this protein is Taste receptor type 1 member 2 (TAS1R2).